The primary structure comprises 196 residues: Anthranilate synthase component 2 (196 aa).

Positions 4-196 (LILIIDNYDS…RDILENFLRM (193 aa)) constitute a Glutamine amidotransferase type-1 domain. 60 to 62 (GPG) contacts L-glutamine. C89 (nucleophile; for GATase activity) is an active-site residue. Residues Q93 and 138–139 (SL) contribute to the L-glutamine site. Active-site for GATase activity residues include H177 and E179.

As to quaternary structure, heterotetramer consisting of two non-identical subunits: a beta subunit (TrpG) and a large alpha subunit (TrpE).

The enzyme catalyses chorismate + L-glutamine = anthranilate + pyruvate + L-glutamate + H(+). The protein operates within amino-acid biosynthesis; L-tryptophan biosynthesis; L-tryptophan from chorismate: step 1/5. Its function is as follows. Part of a heterotetrameric complex that catalyzes the two-step biosynthesis of anthranilate, an intermediate in the biosynthesis of L-tryptophan. In the first step, the glutamine-binding beta subunit (TrpG) of anthranilate synthase (AS) provides the glutamine amidotransferase activity which generates ammonia as a substrate that, along with chorismate, is used in the second step, catalyzed by the large alpha subunit of AS (TrpE) to produce anthranilate. In the absence of TrpG, TrpE can synthesize anthranilate directly from chorismate and high concentrations of ammonia. The protein is Anthranilate synthase component 2 (trpG) of Methanothermobacter marburgensis (strain ATCC BAA-927 / DSM 2133 / JCM 14651 / NBRC 100331 / OCM 82 / Marburg) (Methanobacterium thermoautotrophicum).